We begin with the raw amino-acid sequence, 458 residues long: Argininosuccinate lyase (458 aa).

Belongs to the lyase 1 family. Argininosuccinate lyase subfamily.

It is found in the cytoplasm. The enzyme catalyses 2-(N(omega)-L-arginino)succinate = fumarate + L-arginine. Its pathway is amino-acid biosynthesis; L-arginine biosynthesis; L-arginine from L-ornithine and carbamoyl phosphate: step 3/3. This chain is Argininosuccinate lyase, found in Actinobacillus pleuropneumoniae serotype 5b (strain L20).